The following is a 213-amino-acid chain: Uridine kinase (213 aa).

Residue 15 to 22 (GASASGKS) coordinates ATP.

Belongs to the uridine kinase family.

It localises to the cytoplasm. It catalyses the reaction uridine + ATP = UMP + ADP + H(+). The catalysed reaction is cytidine + ATP = CMP + ADP + H(+). Its pathway is pyrimidine metabolism; CTP biosynthesis via salvage pathway; CTP from cytidine: step 1/3. It functions in the pathway pyrimidine metabolism; UMP biosynthesis via salvage pathway; UMP from uridine: step 1/1. The sequence is that of Uridine kinase from Yersinia enterocolitica serotype O:8 / biotype 1B (strain NCTC 13174 / 8081).